Here is a 198-residue protein sequence, read N- to C-terminus: Molybdenum cofactor guanylyltransferase (198 aa).

GTP-binding positions include 14-16 (LAG), Lys27, Asp73, and Asp103. Asp103 lines the Mg(2+) pocket.

The protein belongs to the MobA family. In terms of assembly, monomer. Mg(2+) is required as a cofactor.

It is found in the cytoplasm. It carries out the reaction Mo-molybdopterin + GTP + H(+) = Mo-molybdopterin guanine dinucleotide + diphosphate. In terms of biological role, transfers a GMP moiety from GTP to Mo-molybdopterin (Mo-MPT) cofactor (Moco or molybdenum cofactor) to form Mo-molybdopterin guanine dinucleotide (Mo-MGD) cofactor. This chain is Molybdenum cofactor guanylyltransferase, found in Pseudomonas paraeruginosa (strain DSM 24068 / PA7) (Pseudomonas aeruginosa (strain PA7)).